A 939-amino-acid polypeptide reads, in one-letter code: MNEDQFPKAYDPKSSETGVYSFWERSGMFVANASSEKPAYSIVMPPPNVTGILHMGHALVNTLQDTLIRYKRMQGFEVCWVPGTDHAGIATQTVVERHLKASLGKRRTDFSREEFLKHVWDWKEKSQNVILSQLRQLGCSCDWSRQRFTMDPGANRAVKKAFKILFDKGVIYRGYYLVNWDPILQTALADDEVEYEERDGWLYYIRYQVVNSEEFITVATTRPETLLGDTAIAVSPEDQRYSHLIGAKVVVPFVNREIPIIGDFSVDASFGTGAVKITPAHDKDDYKTGMNHQLPMINILTSTGEINENGGIFTGLSREVARENIITSLEALGLFVKKEAYSSRVGVSYRSGAIIEPYLSKQWFVSVDSFRDSLREFVNSEEIRIFPPEFVRNYLTWVNNLKDWCISRQLWWGHRIPVWHNKHDENVICFDGEGGPEEVMRDPESWYQDPDVLDTWFSSGLWPLTCFGWPDEDSLDLKKFYPTAVLVTGHDILFFWVTRMVLMCSAMVDTEPFSDVFLHGLIFGKSYREYDEKGEWFYVSGERKRDYDKGKALPKNVVAKWEKLSKSKGNVIDPIEMIEAYGADAVRLTLCSCANRGEQIDLDYRLFEEYKNFINKLWNGARFIFGHISELTSRDLEEGVNQDLLGLEDFYILDRFNELLDLIDGHYNCYSFDKIASLAYDFFKNDLCSTYLEIIKPTLFGKQGSDQQRATKRKLLATLLINILGVLHPIVPYITETLFQKLKATLGTVENGKGDSVTGHAVSMLRSEACMVAEYPKPIHVAFPQGLRESFGIAERLVYTIRNIRGEMQLDPREPLQAFVISSEKKELVDVCIPIMCALGGVKTVEQLAEAPKDSIFSLGVVEGIQVGVILPPEHLAKERVRLEKEKTRLEKSIDSVSKLLASEDFRTRANPSLVQAKKDSLRNSQRELQSILDKLASL.

The short motif at 47 to 57 (PNVTGILHMGH) is the 'HIGH' region element. The 'KMSKS' region motif lies at 563 to 567 (KLSKS). Lysine 566 is an ATP binding site. Residues 874-939 (EHLAKERVRL…QSILDKLASL (66 aa)) are a coiled coil.

It belongs to the class-I aminoacyl-tRNA synthetase family. ValS type 1 subfamily. As to quaternary structure, monomer.

The protein resides in the cytoplasm. It catalyses the reaction tRNA(Val) + L-valine + ATP = L-valyl-tRNA(Val) + AMP + diphosphate. In terms of biological role, catalyzes the attachment of valine to tRNA(Val). As ValRS can inadvertently accommodate and process structurally similar amino acids such as threonine, to avoid such errors, it has a 'posttransfer' editing activity that hydrolyzes mischarged Thr-tRNA(Val) in a tRNA-dependent manner. This chain is Valine--tRNA ligase, found in Chlamydia trachomatis serovar L2 (strain ATCC VR-902B / DSM 19102 / 434/Bu).